The primary structure comprises 266 residues: Glutamate racemase (266 aa).

Substrate-binding positions include Asp-9–Ser-10 and Tyr-41–Gly-42. The active-site Proton donor/acceptor is Cys-72. Asn-73–Thr-74 serves as a coordination point for substrate. Catalysis depends on Cys-184, which acts as the Proton donor/acceptor. Thr-185–His-186 provides a ligand contact to substrate.

Belongs to the aspartate/glutamate racemases family.

The enzyme catalyses L-glutamate = D-glutamate. The protein operates within cell wall biogenesis; peptidoglycan biosynthesis. In terms of biological role, provides the (R)-glutamate required for cell wall biosynthesis. The sequence is that of Glutamate racemase from Staphylococcus carnosus (strain TM300).